Reading from the N-terminus, the 344-residue chain is MIRAGIVGGTGYTGVELLRLLLPHPEVELVAITSRAEAGQRVDEHFPNLRGHCNLSYTAPDPAILGTLDVVFFATPHGVAMDSAPKLLAEGVRIIDLGADFRLPDAEVFAQWYGMAHRAPEVLGEACYGLPEYYRTKISEARLIANPGCYPTAVILGLAPLLAEGLLQEDTLIADCKSGVSGAGRSAKVGLILPETADSVSAYGVGGHRHRPEIEAVLSDISGTPLELQFTPHLMPMIRGIHATLYGRLAQPMSDAALQDLFATRYASEPFVDVLPFGSHPATRSVRGANMCLIAVHQPRPGQVVVLSVIDNLVKGAAGQAIQNMNRLFSLAEDAGLMQIALLP.

Cysteine 149 is a catalytic residue.

The protein belongs to the NAGSA dehydrogenase family. Type 1 subfamily.

The protein resides in the cytoplasm. It carries out the reaction N-acetyl-L-glutamate 5-semialdehyde + phosphate + NADP(+) = N-acetyl-L-glutamyl 5-phosphate + NADPH + H(+). It functions in the pathway amino-acid biosynthesis; L-arginine biosynthesis; N(2)-acetyl-L-ornithine from L-glutamate: step 3/4. In terms of biological role, catalyzes the NADPH-dependent reduction of N-acetyl-5-glutamyl phosphate to yield N-acetyl-L-glutamate 5-semialdehyde. This chain is N-acetyl-gamma-glutamyl-phosphate reductase, found in Acidithiobacillus ferrooxidans (strain ATCC 23270 / DSM 14882 / CIP 104768 / NCIMB 8455) (Ferrobacillus ferrooxidans (strain ATCC 23270)).